A 198-amino-acid polypeptide reads, in one-letter code: V-type proton ATPase subunit E (198 aa).

Belongs to the V-ATPase E subunit family.

Its function is as follows. Produces ATP from ADP in the presence of a proton gradient across the membrane. This chain is V-type proton ATPase subunit E, found in Borrelia turicatae (strain 91E135).